The following is a 325-amino-acid chain: NADH-quinone oxidoreductase subunit H (325 aa).

8 consecutive transmembrane segments (helical) span residues 11–31, 81–101, 114–134, 154–174, 186–206, 237–257, 265–285, and 304–324; these read ILLT…CGAF, VIFT…FAIV, IGIL…LFAG, LSYE…AGSF, VWNV…GVAV, FFVG…TLFF, LPPF…FILI, and ICLP…LWQA.

The protein belongs to the complex I subunit 1 family. In terms of assembly, NDH-1 is composed of 13 different subunits. Subunits NuoA, H, J, K, L, M, N constitute the membrane sector of the complex.

The protein resides in the cell inner membrane. The enzyme catalyses a quinone + NADH + 5 H(+)(in) = a quinol + NAD(+) + 4 H(+)(out). NDH-1 shuttles electrons from NADH, via FMN and iron-sulfur (Fe-S) centers, to quinones in the respiratory chain. The immediate electron acceptor for the enzyme in this species is believed to be ubiquinone. Couples the redox reaction to proton translocation (for every two electrons transferred, four hydrogen ions are translocated across the cytoplasmic membrane), and thus conserves the redox energy in a proton gradient. This subunit may bind ubiquinone. This is NADH-quinone oxidoreductase subunit H from Escherichia coli O139:H28 (strain E24377A / ETEC).